Consider the following 446-residue polypeptide: Chromosomal replication initiator protein DnaA (446 aa).

The tract at residues 1 to 92 (MENISDLWNS…SQAEEEIDLP (92 aa)) is domain I, interacts with DnaA modulators. The segment at 93-109 (PAKPNAAQDDSNHLPQS) is domain II. The interval 110–326 (MLNPKYTFDT…GALIRVVAYS (217 aa)) is domain III, AAA+ region. Positions 154, 156, 157, and 158 each coordinate ATP. The tract at residues 327–446 (SLINKDINAD…QVEEINDILK (120 aa)) is domain IV, binds dsDNA.

It belongs to the DnaA family. Oligomerizes as a right-handed, spiral filament on DNA at oriC.

The protein localises to the cytoplasm. Plays an essential role in the initiation and regulation of chromosomal replication. ATP-DnaA binds to the origin of replication (oriC) to initiate formation of the DNA replication initiation complex once per cell cycle. Binds the DnaA box (a 9 base pair repeat at the origin) and separates the double-stranded (ds)DNA. Forms a right-handed helical filament on oriC DNA; dsDNA binds to the exterior of the filament while single-stranded (ss)DNA is stabiized in the filament's interior. The ATP-DnaA-oriC complex binds and stabilizes one strand of the AT-rich DNA unwinding element (DUE), permitting loading of DNA polymerase. After initiation quickly degrades to an ADP-DnaA complex that is not apt for DNA replication. Binds acidic phospholipids. The sequence is that of Chromosomal replication initiator protein DnaA from Bacillus anthracis (strain A0248).